Reading from the N-terminus, the 178-residue chain is Methylmalonyl-CoA epimerase, mitochondrial (178 aa).

The N-terminal 38 residues, M1 to F38, are a transit peptide targeting the mitochondrion. One can recognise a VOC domain in the interval R49 to A178. Residue H52 coordinates Co(2+). An N6-succinyllysine modification is found at K116. H124 lines the Co(2+) pocket. Residue K152 is modified to N6-acetyllysine; alternate. K152 bears the N6-succinyllysine; alternate mark. E174 lines the Co(2+) pocket.

This sequence belongs to the methylmalonyl-CoA epimerase family.

It is found in the mitochondrion. The enzyme catalyses (R)-methylmalonyl-CoA = (S)-methylmalonyl-CoA. In terms of biological role, methylmalonyl-CoA epimerase involved in propionyl-CoA metabolism. This is Methylmalonyl-CoA epimerase, mitochondrial from Mus musculus (Mouse).